The following is a 316-amino-acid chain: Acetylglutamate kinase (316 aa).

Residues 76–77 (GG), Arg-98, and Asn-207 each bind substrate.

This sequence belongs to the acetylglutamate kinase family. ArgB subfamily.

It is found in the cytoplasm. It catalyses the reaction N-acetyl-L-glutamate + ATP = N-acetyl-L-glutamyl 5-phosphate + ADP. The protein operates within amino-acid biosynthesis; L-arginine biosynthesis; N(2)-acetyl-L-ornithine from L-glutamate: step 2/4. Catalyzes the ATP-dependent phosphorylation of N-acetyl-L-glutamate. This chain is Acetylglutamate kinase, found in Paenarthrobacter aurescens (strain TC1).